Here is a 424-residue protein sequence, read N- to C-terminus: Histidine--tRNA ligase (424 aa).

It belongs to the class-II aminoacyl-tRNA synthetase family. As to quaternary structure, homodimer.

It localises to the cytoplasm. The enzyme catalyses tRNA(His) + L-histidine + ATP = L-histidyl-tRNA(His) + AMP + diphosphate + H(+). In Salmonella paratyphi A (strain ATCC 9150 / SARB42), this protein is Histidine--tRNA ligase.